Consider the following 113-residue polypeptide: T cell receptor alpha variable 8-4 (113 aa).

A signal peptide spans 1–20 (MLLLLVPVLEVIFTLGGTRA). Residues 21–113 (QSVTQLGSHV…DAAEYFCAVS (93 aa)) enclose the Ig-like domain. Cysteine 42 and cysteine 110 are oxidised to a cystine. N-linked (GlcNAc...) asparagine glycosylation occurs at asparagine 43.

As to quaternary structure, alpha-beta TR is a heterodimer composed of an alpha and beta chain; disulfide-linked. The alpha-beta TR is associated with the transmembrane signaling CD3 coreceptor proteins to form the TR-CD3 (TcR or TCR). The assembly of alpha-beta TR heterodimers with CD3 occurs in the endoplasmic reticulum where a single alpha-beta TR heterodimer associates with one CD3D-CD3E heterodimer, one CD3G-CD3E heterodimer and one CD247 homodimer forming a stable octameric structure. CD3D-CD3E and CD3G-CD3E heterodimers preferentially associate with TR alpha and TR beta chains, respectively. The association of the CD247 homodimer is the last step of TcR assembly in the endoplasmic reticulum and is required for transport to the cell surface.

Its subcellular location is the cell membrane. Functionally, v region of the variable domain of T cell receptor (TR) alpha chain that participates in the antigen recognition. Alpha-beta T cell receptors are antigen specific receptors which are essential to the immune response and are present on the cell surface of T lymphocytes. Recognize peptide-major histocompatibility (MH) (pMH) complexes that are displayed by antigen presenting cells (APC), a prerequisite for efficient T cell adaptive immunity against pathogens. Binding of alpha-beta TR to pMH complex initiates TR-CD3 clustering on the cell surface and intracellular activation of LCK that phosphorylates the ITAM motifs of CD3G, CD3D, CD3E and CD247 enabling the recruitment of ZAP70. In turn ZAP70 phosphorylates LAT, which recruits numerous signaling molecules to form the LAT signalosome. The LAT signalosome propagates signal branching to three major signaling pathways, the calcium, the mitogen-activated protein kinase (MAPK) kinase and the nuclear factor-kappa-B (NF-kB) pathways, leading to the mobilization of transcription factors that are critical for gene expression and essential for T cell growth and differentiation. The T cell repertoire is generated in the thymus, by V-(D)-J rearrangement. This repertoire is then shaped by intrathymic selection events to generate a peripheral T cell pool of self-MH restricted, non-autoaggressive T cells. Post-thymic interaction of alpha-beta TR with the pMH complexes shapes TR structural and functional avidity. In Homo sapiens (Human), this protein is T cell receptor alpha variable 8-4.